We begin with the raw amino-acid sequence, 652 residues long: DNA ligase (652 aa).

NAD(+) is bound by residues 29-33, 78-79, and Glu107; these read DAEYD and SL. The active-site N6-AMP-lysine intermediate is Lys109. 4 residues coordinate NAD(+): Arg130, Glu164, Lys278, and Lys302. Zn(2+) is bound by residues Cys395, Cys398, Cys413, and Cys418. The 76-residue stretch at 577–652 folds into the BRCT domain; sequence DENAALSGMT…IKDEAWLESL (76 aa).

It belongs to the NAD-dependent DNA ligase family. LigA subfamily. Mg(2+) serves as cofactor. Requires Mn(2+) as cofactor.

The catalysed reaction is NAD(+) + (deoxyribonucleotide)n-3'-hydroxyl + 5'-phospho-(deoxyribonucleotide)m = (deoxyribonucleotide)n+m + AMP + beta-nicotinamide D-nucleotide.. Its function is as follows. DNA ligase that catalyzes the formation of phosphodiester linkages between 5'-phosphoryl and 3'-hydroxyl groups in double-stranded DNA using NAD as a coenzyme and as the energy source for the reaction. It is essential for DNA replication and repair of damaged DNA. The protein is DNA ligase of Streptococcus suis (strain 05ZYH33).